The chain runs to 91 residues: Non-specific lipid-transfer protein 1 (91 aa).

Cystine bridges form between Cys3–Cys50, Cys13–Cys27, Cys28–Cys73, and Cys48–Cys87. A 1,2-diacyl-sn-glycero-3-phosphocholine-binding residues include Arg44 and Tyr79.

As to quaternary structure, monomer.

Its function is as follows. Plant non-specific lipid-transfer proteins transfer phospholipids as well as galactolipids across membranes. May play a role in wax or cutin deposition in the cell walls of expanding epidermal cells and certain secretory tissues. Has antifungal activity against F.solani, F.oxysporum, P.aphanidermatum and S.rolfsii. Has antibacterial activity against the Gram-positive bacterium S.aureus but not against the Gram-negative bacterium S.typhimurium. The sequence is that of Non-specific lipid-transfer protein 1 from Vigna radiata var. radiata (Mung bean).